A 234-amino-acid chain; its full sequence is NAD-dependent protein deacylase (234 aa).

One can recognise a Deacetylase sirtuin-type domain in the interval methionine 1–proline 234. Glycine 9–tryptophan 28 serves as a coordination point for NAD(+). Substrate contacts are provided by tyrosine 53 and arginine 56. Residue glutamine 86–aspartate 89 participates in NAD(+) binding. Histidine 104 (proton acceptor) is an active-site residue. Glycine 175–serine 177 serves as a coordination point for NAD(+).

The protein belongs to the sirtuin family. Class III subfamily.

The protein localises to the cytoplasm. It carries out the reaction N(6)-acetyl-L-lysyl-[protein] + NAD(+) + H2O = 2''-O-acetyl-ADP-D-ribose + nicotinamide + L-lysyl-[protein]. It catalyses the reaction N(6)-succinyl-L-lysyl-[protein] + NAD(+) + H2O = 2''-O-succinyl-ADP-D-ribose + nicotinamide + L-lysyl-[protein]. Functionally, NAD-dependent lysine deacetylase and desuccinylase that specifically removes acetyl and succinyl groups on target proteins. Modulates the activities of several proteins which are inactive in their acylated form. The chain is NAD-dependent protein deacylase from Bacteroides thetaiotaomicron (strain ATCC 29148 / DSM 2079 / JCM 5827 / CCUG 10774 / NCTC 10582 / VPI-5482 / E50).